Reading from the N-terminus, the 129-residue chain is Class I hydrophobin 11 (129 aa).

Residues 1–19 form the signal peptide; that stretch reads MRLTPLLAALALPLLTVLA. Intrachain disulfides connect cysteine 48–cysteine 106, cysteine 55–cysteine 100, cysteine 56–cysteine 89, and cysteine 107–cysteine 122.

Belongs to the fungal hydrophobin family. As to quaternary structure, self-assembles to form functional amyloid fibrils called rodlets. Self-assembly into fibrillar rodlets occurs spontaneously at hydrophobic:hydrophilic interfaces and the rodlets further associate laterally to form amphipathic monolayers.

It is found in the secreted. The protein resides in the cell wall. Aerial growth, conidiation, and dispersal of filamentous fungi in the environment rely upon a capability of their secreting small amphipathic proteins called hydrophobins (HPBs) with low sequence identity. Class I can self-assemble into an outermost layer of rodlet bundles on aerial cell surfaces, conferring cellular hydrophobicity that supports fungal growth, development and dispersal; whereas Class II form highly ordered films at water-air interfaces through intermolecular interactions but contribute nothing to the rodlet structure. This is Class I hydrophobin 11 from Pleurotus ostreatus (strain PC15) (Oyster mushroom).